Reading from the N-terminus, the 205-residue chain is Recombination protein RecR (205 aa).

Residues 58–73 form a C4-type zinc finger; the sequence is CKKCHTISDHELCAIC. The Toprim domain maps to 81–177; that stretch reads RVVCIVEDIR…KISTIARGIP (97 aa).

It belongs to the RecR family.

In terms of biological role, may play a role in DNA repair. It seems to be involved in an RecBC-independent recombinational process of DNA repair. It may act with RecF and RecO. The protein is Recombination protein RecR of Cytophaga hutchinsonii (strain ATCC 33406 / DSM 1761 / CIP 103989 / NBRC 15051 / NCIMB 9469 / D465).